The sequence spans 704 residues: DNA-binding protein RFX2 (704 aa).

The tract at residues 1 to 39 (MQNSEGGADSPASVALRPSAAAPPVPASPQRVLVQAASS) is disordered. The segment covering 10–20 (SPASVALRPSA) has biased composition (low complexity). Serine 28 carries the phosphoserine modification. The segment at residues 199–274 (HLQWLLDNYE…YHYYGIRLKP (76 aa)) is a DNA-binding region (RFX-type winged-helix). Residues 292-334 (QQPMHQKPRYRPAQKTDSLGDSSSHSGLHSTPEQTTAAQNQHH) form a disordered region. The segment covering 307-334 (TDSLGDSSSHSGLHSTPEQTTAAQNQHH) has biased composition (low complexity). A Phosphoserine modification is found at serine 416.

This sequence belongs to the RFX family. Homodimer; probably only forms homodimers in testis. Heterodimer; heterodimerizes with RFX1 and RFX3.

The protein localises to the nucleus. It localises to the cytoplasm. In terms of biological role, transcription factor that acts as a key regulator of spermatogenesis. Acts by regulating expression of genes required for the haploid phase during spermiogenesis, such as genes required for cilium assembly and function. Recognizes and binds the X-box, a regulatory motif with DNA sequence 5'-GTNRCC(0-3N)RGYAAC-3' present on promoters. Probably activates transcription of the testis-specific histone gene H1-6. The chain is DNA-binding protein RFX2 (RFX2) from Pongo abelii (Sumatran orangutan).